The primary structure comprises 168 residues: Small ribosomal subunit protein uS7c (168 aa).

The protein belongs to the universal ribosomal protein uS7 family. As to quaternary structure, part of the 30S ribosomal subunit.

Its subcellular location is the plastid. The protein resides in the chloroplast. Its function is as follows. One of the primary rRNA binding proteins, it binds directly to 16S rRNA where it nucleates assembly of the head domain of the 30S subunit. This Chlamydomonas reinhardtii (Chlamydomonas smithii) protein is Small ribosomal subunit protein uS7c (rps7).